Here is a 202-residue protein sequence, read N- to C-terminus: Holliday junction resolvase RecU (202 aa).

Residues Thr85, Asp87, Glu100, and Gln119 each contribute to the Mg(2+) site.

It belongs to the RecU family. Mg(2+) is required as a cofactor.

It localises to the cytoplasm. The enzyme catalyses Endonucleolytic cleavage at a junction such as a reciprocal single-stranded crossover between two homologous DNA duplexes (Holliday junction).. In terms of biological role, endonuclease that resolves Holliday junction intermediates in genetic recombination. Cleaves mobile four-strand junctions by introducing symmetrical nicks in paired strands. Promotes annealing of linear ssDNA with homologous dsDNA. Required for DNA repair, homologous recombination and chromosome segregation. This chain is Holliday junction resolvase RecU, found in Streptococcus equi subsp. zooepidemicus (strain MGCS10565).